Reading from the N-terminus, the 337-residue chain is 4-hydroxythreonine-4-phosphate dehydrogenase (337 aa).

Residues His137 and Thr138 each coordinate substrate. Residues His167, His212, and His267 each coordinate a divalent metal cation. 3 residues coordinate substrate: Lys275, Asn284, and Arg293.

This sequence belongs to the PdxA family. As to quaternary structure, homodimer. Zn(2+) is required as a cofactor. It depends on Mg(2+) as a cofactor. The cofactor is Co(2+).

Its subcellular location is the cytoplasm. It carries out the reaction 4-(phosphooxy)-L-threonine + NAD(+) = 3-amino-2-oxopropyl phosphate + CO2 + NADH. Its pathway is cofactor biosynthesis; pyridoxine 5'-phosphate biosynthesis; pyridoxine 5'-phosphate from D-erythrose 4-phosphate: step 4/5. In terms of biological role, catalyzes the NAD(P)-dependent oxidation of 4-(phosphooxy)-L-threonine (HTP) into 2-amino-3-oxo-4-(phosphooxy)butyric acid which spontaneously decarboxylates to form 3-amino-2-oxopropyl phosphate (AHAP). This Ectopseudomonas mendocina (strain ymp) (Pseudomonas mendocina) protein is 4-hydroxythreonine-4-phosphate dehydrogenase.